A 249-amino-acid chain; its full sequence is U1 small nuclear ribonucleoprotein usp102 (249 aa).

The disordered stretch occupies residues 1–25 (MDPQTNSHQEVQQPSPKETDSQTPS). The RRM 1 domain maps to 26 to 105 (ETLYIRNIEE…KPMMIQYSKS (80 aa)). Residues 113–157 (RESPEEIETRKKDRKNRREMLKRTSALQPAAPKPTHKKPVPKRNV) are disordered. Residues 114–134 (ESPEEIETRKKDRKNRREMLK) show a composition bias toward basic and acidic residues. The RRM 2 domain occupies 174–247 (KVLLLQNIPQ…NQIKVTFARK (74 aa)).

Belongs to the RRM U1 A/B'' family. Component of the spliceosome where it is associated with snRNP U1.

Its subcellular location is the nucleus. The protein localises to the nucleolus. Its function is as follows. Involved in nuclear mRNA splicing. The chain is U1 small nuclear ribonucleoprotein usp102 from Schizosaccharomyces pombe (strain 972 / ATCC 24843) (Fission yeast).